The primary structure comprises 164 residues: 3-isopropylmalate dehydratase small subunit 1 (164 aa).

Belongs to the LeuD family. LeuD type 2 subfamily. Heterodimer of LeuC and LeuD.

The enzyme catalyses (2R,3S)-3-isopropylmalate = (2S)-2-isopropylmalate. It functions in the pathway amino-acid biosynthesis; L-leucine biosynthesis; L-leucine from 3-methyl-2-oxobutanoate: step 2/4. In terms of biological role, catalyzes the isomerization between 2-isopropylmalate and 3-isopropylmalate, via the formation of 2-isopropylmaleate. The polypeptide is 3-isopropylmalate dehydratase small subunit 1 (leuD1) (Pyrococcus furiosus (strain ATCC 43587 / DSM 3638 / JCM 8422 / Vc1)).